Here is a 394-residue protein sequence, read N- to C-terminus: Elongation factor Tu (394 aa).

Residues Lys10–Lys204 enclose the tr-type G domain. A G1 region spans residues Gly19–Thr26. Gly19–Thr26 provides a ligand contact to GTP. Position 26 (Thr26) interacts with Mg(2+). The segment at Gly60–Asn64 is G2. Residues Asp81–Gly84 form a G3 region. Residues Asp81–His85 and Asn136–Asp139 contribute to the GTP site. The segment at Asn136–Asp139 is G4. A G5 region spans residues Ser174–Leu176.

Belongs to the TRAFAC class translation factor GTPase superfamily. Classic translation factor GTPase family. EF-Tu/EF-1A subfamily. Monomer.

Its subcellular location is the cytoplasm. The enzyme catalyses GTP + H2O = GDP + phosphate + H(+). GTP hydrolase that promotes the GTP-dependent binding of aminoacyl-tRNA to the A-site of ribosomes during protein biosynthesis. The polypeptide is Elongation factor Tu (Baumannia cicadellinicola subsp. Homalodisca coagulata).